The following is a 413-amino-acid chain: Tryptophan synthase beta chain 2 (413 aa).

An N6-(pyridoxal phosphate)lysine modification is found at Lys107.

This sequence belongs to the TrpB family. Tetramer of two alpha and two beta chains. It depends on pyridoxal 5'-phosphate as a cofactor.

It carries out the reaction (1S,2R)-1-C-(indol-3-yl)glycerol 3-phosphate + L-serine = D-glyceraldehyde 3-phosphate + L-tryptophan + H2O. It functions in the pathway amino-acid biosynthesis; L-tryptophan biosynthesis; L-tryptophan from chorismate: step 5/5. Functionally, the beta subunit is responsible for the synthesis of L-tryptophan from indole and L-serine. The polypeptide is Tryptophan synthase beta chain 2 (trpB2) (Nostoc sp. (strain PCC 7120 / SAG 25.82 / UTEX 2576)).